Consider the following 306-residue polypeptide: Ribosomal RNA small subunit methyltransferase H (306 aa).

Residues glycine 36 to histidine 38, aspartate 56, phenylalanine 80, aspartate 97, and glutamine 104 contribute to the S-adenosyl-L-methionine site. Residues alanine 280–alanine 306 form a disordered region.

It belongs to the methyltransferase superfamily. RsmH family.

The protein resides in the cytoplasm. The enzyme catalyses cytidine(1402) in 16S rRNA + S-adenosyl-L-methionine = N(4)-methylcytidine(1402) in 16S rRNA + S-adenosyl-L-homocysteine + H(+). Functionally, specifically methylates the N4 position of cytidine in position 1402 (C1402) of 16S rRNA. This chain is Ribosomal RNA small subunit methyltransferase H, found in Polaromonas naphthalenivorans (strain CJ2).